The following is a 183-amino-acid chain: MQNRTGLILCALSLLTGFLMICLGGFFISNSIFHSQRNLVVAYVLLPMGFVILLSGIFWGTYRQANENKEMFNHVLRQHLAFQDLPLATVDRPDFYPPAYEESLDVEKQACPAGRELLGFPPPLYTETNLEFEHLEDPQPEAPPPYQEIIADAGAPAKAQDAEEPSRVLKAGTALQLTELTGR.

2 helical membrane passes run 8–28 (ILCA…GFFI) and 39–59 (LVVA…GIFW).

Its subcellular location is the membrane. This is Transmembrane protein 252 (Tmem252) from Mus musculus (Mouse).